The sequence spans 204 residues: ATP synthase subunit b 2 (204 aa).

The chain crosses the membrane as a helical span at residues 50–70 (IFWLAVTFGLLLFLMSKVALP).

It belongs to the ATPase B chain family. As to quaternary structure, F-type ATPases have 2 components, F(1) - the catalytic core - and F(0) - the membrane proton channel. F(1) has five subunits: alpha(3), beta(3), gamma(1), delta(1), epsilon(1). F(0) has three main subunits: a(1), b(2) and c(10-14). The alpha and beta chains form an alternating ring which encloses part of the gamma chain. F(1) is attached to F(0) by a central stalk formed by the gamma and epsilon chains, while a peripheral stalk is formed by the delta and b chains.

It is found in the cell inner membrane. Functionally, f(1)F(0) ATP synthase produces ATP from ADP in the presence of a proton or sodium gradient. F-type ATPases consist of two structural domains, F(1) containing the extramembraneous catalytic core and F(0) containing the membrane proton channel, linked together by a central stalk and a peripheral stalk. During catalysis, ATP synthesis in the catalytic domain of F(1) is coupled via a rotary mechanism of the central stalk subunits to proton translocation. Component of the F(0) channel, it forms part of the peripheral stalk, linking F(1) to F(0). The b'-subunit is a diverged and duplicated form of b found in plants and photosynthetic bacteria. This chain is ATP synthase subunit b 2 (atpF2), found in Rhodospirillum centenum (strain ATCC 51521 / SW).